The sequence spans 441 residues: Homoserine dehydrogenase (441 aa).

Residues asparagine 17 and valine 18 each contribute to the NADP(+) site. The NAD(+) site is built by valine 18, valine 37, and glycine 47. Valine 18 is a binding site for NADPH. NADP(+)-binding residues include arginine 49, arginine 50, and lysine 107. Arginine 49 provides a ligand contact to NADPH. NADPH is bound at residue lysine 107. Na(+) is bound by residues glutamate 131, valine 134, glycine 136, and isoleucine 138. The NADP(+) site is built by glycine 189 and glutamate 192. L-homoserine-binding residues include glutamate 192 and aspartate 203. The Proton donor role is filled by lysine 207. Glycine 309 contacts NADP(+). NAD(+) is bound at residue glycine 309. Residue glycine 309 coordinates NADPH. The 80-residue stretch at 356 to 435 folds into the ACT domain; that stretch reads YVSMNVADKP…VVQGVSSVIR (80 aa).

Belongs to the homoserine dehydrogenase family. A metal cation is required as a cofactor.

It carries out the reaction L-homoserine + NADP(+) = L-aspartate 4-semialdehyde + NADPH + H(+). It catalyses the reaction L-homoserine + NAD(+) = L-aspartate 4-semialdehyde + NADH + H(+). Its pathway is amino-acid biosynthesis; L-methionine biosynthesis via de novo pathway; L-homoserine from L-aspartate: step 3/3. The protein operates within amino-acid biosynthesis; L-threonine biosynthesis; L-threonine from L-aspartate: step 3/5. Functionally, catalyzes the conversion of L-aspartate-beta-semialdehyde (L-Asa) to L-homoserine (L-Hse), the third step in the biosynthesis of threonine and methionine from aspartate. The polypeptide is Homoserine dehydrogenase (hom) (Mycobacterium tuberculosis (strain CDC 1551 / Oshkosh)).